The following is a 329-amino-acid chain: Acetyl-coenzyme A carboxylase carboxyl transferase subunit alpha (329 aa).

The CoA carboxyltransferase C-terminal domain occupies 40 to 294 (QLETLAARRR…KNALEKHLSE (255 aa)).

It belongs to the AccA family. In terms of assembly, acetyl-CoA carboxylase is a heterohexamer composed of biotin carboxyl carrier protein (AccB), biotin carboxylase (AccC) and two subunits each of ACCase subunit alpha (AccA) and ACCase subunit beta (AccD).

Its subcellular location is the cytoplasm. It catalyses the reaction N(6)-carboxybiotinyl-L-lysyl-[protein] + acetyl-CoA = N(6)-biotinyl-L-lysyl-[protein] + malonyl-CoA. It participates in lipid metabolism; malonyl-CoA biosynthesis; malonyl-CoA from acetyl-CoA: step 1/1. In terms of biological role, component of the acetyl coenzyme A carboxylase (ACC) complex. First, biotin carboxylase catalyzes the carboxylation of biotin on its carrier protein (BCCP) and then the CO(2) group is transferred by the carboxyltransferase to acetyl-CoA to form malonyl-CoA. The chain is Acetyl-coenzyme A carboxylase carboxyl transferase subunit alpha from Prochlorococcus marinus (strain NATL2A).